The chain runs to 418 residues: Glucose-1-phosphate adenylyltransferase (418 aa).

Alpha-D-glucose 1-phosphate-binding positions include Tyr104, Gly169, 184–185, and Ser202; that span reads EK.

It belongs to the bacterial/plant glucose-1-phosphate adenylyltransferase family. As to quaternary structure, homotetramer.

The catalysed reaction is alpha-D-glucose 1-phosphate + ATP + H(+) = ADP-alpha-D-glucose + diphosphate. It participates in glycan biosynthesis; glycogen biosynthesis. Involved in the biosynthesis of ADP-glucose, a building block required for the elongation reactions to produce glycogen. Catalyzes the reaction between ATP and alpha-D-glucose 1-phosphate (G1P) to produce pyrophosphate and ADP-Glc. The polypeptide is Glucose-1-phosphate adenylyltransferase (Jannaschia sp. (strain CCS1)).